A 561-amino-acid polypeptide reads, in one-letter code: Sensor histidine kinase BtsS (561 aa).

The Cytoplasmic portion of the chain corresponds to 1–3 (MYD). The helical transmembrane segment at 4–24 (FNLVLLLLQQMCVFLVIAWLM) threads the bilayer. The Periplasmic segment spans residues 25-43 (SKTPLFIPLMQVTVRLPHK). A helical membrane pass occupies residues 44-64 (FLCYIVFSIFCIMGTWFGLHI). Residues 65–72 (DDSIANTR) lie on the Cytoplasmic side of the membrane. Residues 73–93 (AIGAVMGGLLGGPVVGGLVGL) form a helical membrane-spanning segment. The Periplasmic segment spans residues 94–108 (TGGLHRYSMGGMTAL). The helical transmembrane segment at 109-129 (SCMISTIVEGLLGGLVHSILI) threads the bilayer. At 130 to 140 (RRGRTDKVFNP) the chain is on the cytoplasmic side. The helical transmembrane segment at 141-161 (ITAGAVTFVAEMVQMLIILAI) threads the bilayer. The Periplasmic portion of the chain corresponds to 162 to 170 (ARPYEDAVR). A helical transmembrane segment spans residues 171 to 191 (LVSNIAAPMMVTNTVGAALFM). Topologically, residues 192–561 (RILLDKRAMF…TLRLPWRDEA (370 aa)) are cytoplasmic. The region spanning 354–559 (QILAGQYERQ…RITLRLPWRD (206 aa)) is the Histidine kinase domain.

In terms of processing, autophosphorylated.

It localises to the cell inner membrane. It catalyses the reaction ATP + protein L-histidine = ADP + protein N-phospho-L-histidine.. In terms of biological role, member of the two-component regulatory system BtsS/BtsR. BtsS is a high-affinity receptor for extracellular pyruvate that activates BtsR by phosphorylation. The polypeptide is Sensor histidine kinase BtsS (Escherichia coli O6:H1 (strain CFT073 / ATCC 700928 / UPEC)).